A 570-amino-acid chain; its full sequence is Endo-1,4-beta-xylanase 5-like (570 aa).

Positions 1 to 23 are cleaved as a signal peptide; sequence MNSIKNGFFLCMIFLLWCHVDSG. Residues Asn197, Asn261, and Asn307 are each glycosylated (N-linked (GlcNAc...) asparagine). The GH10 domain occupies 202–501; sequence KGVVISLKQT…TQTGDVIDKL (300 aa). The active-site Proton donor is the Glu332. N-linked (GlcNAc...) asparagine glycosylation is present at Asn346. The active-site Nucleophile is Glu439. N-linked (GlcNAc...) asparagine glycans are attached at residues Asn490, Asn515, Asn537, and Asn545.

The protein belongs to the glycosyl hydrolase 10 (cellulase F) family.

The catalysed reaction is Endohydrolysis of (1-&gt;4)-beta-D-xylosidic linkages in xylans.. It participates in glycan degradation; xylan degradation. Its function is as follows. Binds to and hydrolyzes insoluble and soluble xylan substrates. This is Endo-1,4-beta-xylanase 5-like from Arabidopsis thaliana (Mouse-ear cress).